Reading from the N-terminus, the 203-residue chain is Pacifastin-like protease inhibitor cvp4 (203 aa).

Positions 1–19 (MGFLACALLVVATAHAATA) are cleaved as a signal peptide. Pacifastin domains lie at 23-59 (PETC…CDRN), 85-121 (DEPC…CDRN), and 147-184 (DESC…CDRY). 6 cysteine pairs are disulfide-bonded: Cys26-Cys41, Cys36-Cys56, Cys39-Cys51, Cys88-Cys103, Cys98-Cys118, and Cys101-Cys113. Residues 129 to 148 (RKYPEPEKWNSEKERKKSDE) are compositionally biased toward basic and acidic residues. Residues 129–150 (RKYPEPEKWNSEKERKKSDESC) are disordered. Cystine bridges form between Cys150/Cys165, Cys160/Cys181, and Cys163/Cys176.

Belongs to the protease inhibitor I19 family. In terms of tissue distribution, expressed by the venom gland.

It is found in the secreted. Functionally, inhibits trypsin activity and prophenoloxidase (PPO) activation, an enzyme essential for both clotting and insect innate immune responses. It does not inhibit activity of chymotrypsin and protease K, and has no effect on phenoloxidase (PO) activity. The protein is Pacifastin-like protease inhibitor cvp4 of Pimpla hypochondriaca (Parasitoid wasp).